The sequence spans 500 residues: Lysine--tRNA ligase (500 aa).

Mg(2+) is bound by residues Glu-407 and Glu-414.

Belongs to the class-II aminoacyl-tRNA synthetase family. As to quaternary structure, homodimer. Requires Mg(2+) as cofactor.

The protein resides in the cytoplasm. It carries out the reaction tRNA(Lys) + L-lysine + ATP = L-lysyl-tRNA(Lys) + AMP + diphosphate. The sequence is that of Lysine--tRNA ligase from Azobacteroides pseudotrichonymphae genomovar. CFP2.